The chain runs to 249 residues: tRNA pseudouridine synthase A (249 aa).

Aspartate 53 serves as the catalytic Nucleophile. Tyrosine 111 serves as a coordination point for substrate.

This sequence belongs to the tRNA pseudouridine synthase TruA family. In terms of assembly, homodimer.

It catalyses the reaction uridine(38/39/40) in tRNA = pseudouridine(38/39/40) in tRNA. Functionally, formation of pseudouridine at positions 38, 39 and 40 in the anticodon stem and loop of transfer RNAs. This chain is tRNA pseudouridine synthase A, found in Streptococcus pyogenes serotype M3 (strain ATCC BAA-595 / MGAS315).